The primary structure comprises 247 residues: 1-(5-phosphoribosyl)-5-[(5-phosphoribosylamino)methylideneamino] imidazole-4-carboxamide isomerase (247 aa).

The active-site Proton acceptor is the D16. The active-site Proton donor is D135.

Belongs to the HisA/HisF family.

The protein localises to the cytoplasm. The enzyme catalyses 1-(5-phospho-beta-D-ribosyl)-5-[(5-phospho-beta-D-ribosylamino)methylideneamino]imidazole-4-carboxamide = 5-[(5-phospho-1-deoxy-D-ribulos-1-ylimino)methylamino]-1-(5-phospho-beta-D-ribosyl)imidazole-4-carboxamide. The protein operates within amino-acid biosynthesis; L-histidine biosynthesis; L-histidine from 5-phospho-alpha-D-ribose 1-diphosphate: step 4/9. The chain is 1-(5-phosphoribosyl)-5-[(5-phosphoribosylamino)methylideneamino] imidazole-4-carboxamide isomerase from Paenarthrobacter aurescens (strain TC1).